The primary structure comprises 186 residues: dTTP/UTP pyrophosphatase (186 aa).

Aspartate 66 (proton acceptor) is an active-site residue.

The protein belongs to the Maf family. YhdE subfamily. Requires a divalent metal cation as cofactor.

The protein resides in the cytoplasm. The enzyme catalyses dTTP + H2O = dTMP + diphosphate + H(+). It catalyses the reaction UTP + H2O = UMP + diphosphate + H(+). Functionally, nucleoside triphosphate pyrophosphatase that hydrolyzes dTTP and UTP. May have a dual role in cell division arrest and in preventing the incorporation of modified nucleotides into cellular nucleic acids. In Pyrococcus horikoshii (strain ATCC 700860 / DSM 12428 / JCM 9974 / NBRC 100139 / OT-3), this protein is dTTP/UTP pyrophosphatase.